A 322-amino-acid polypeptide reads, in one-letter code: Probable heme-iron transport system permease protein IsdF (322 aa).

9 consecutive transmembrane segments (helical) span residues L9 to G29, I61 to A81, A89 to I109, F114 to L134, V143 to L163, I179 to L199, V233 to V253, V267 to G287, and L294 to I314.

The protein belongs to the binding-protein-dependent transport system permease family. FecCD subfamily.

The protein resides in the cell membrane. In terms of biological role, part of the binding-protein-dependent transport system for heme-iron. Responsible for the translocation of the substrate across the membrane. This chain is Probable heme-iron transport system permease protein IsdF (isdF), found in Staphylococcus aureus (strain MSSA476).